The primary structure comprises 152 residues: SsrA-binding protein (152 aa).

It belongs to the SmpB family.

The protein localises to the cytoplasm. In terms of biological role, required for rescue of stalled ribosomes mediated by trans-translation. Binds to transfer-messenger RNA (tmRNA), required for stable association of tmRNA with ribosomes. tmRNA and SmpB together mimic tRNA shape, replacing the anticodon stem-loop with SmpB. tmRNA is encoded by the ssrA gene; the 2 termini fold to resemble tRNA(Ala) and it encodes a 'tag peptide', a short internal open reading frame. During trans-translation Ala-aminoacylated tmRNA acts like a tRNA, entering the A-site of stalled ribosomes, displacing the stalled mRNA. The ribosome then switches to translate the ORF on the tmRNA; the nascent peptide is terminated with the 'tag peptide' encoded by the tmRNA and targeted for degradation. The ribosome is freed to recommence translation, which seems to be the essential function of trans-translation. The chain is SsrA-binding protein from Rickettsia peacockii (strain Rustic).